The sequence spans 391 residues: MTEEFNESMINDIKEGDKVTGEVQQVEDKQVVVHINGGKFNGIIPISQLSTHHIDSPSEVVKEGDEVEAYVTKVEFDEENETGAYILSRRQLETEKSYSYLQEKLDNNEIIEAKVTEVVKGGLVVDVGQRGFVPASLISTDFIEDFSVFDGQTIRIKVEELDPENNRVILSRKAVEQEENDAKKDQLLQSLNEGDVIDGKVARLTQFGAFIDIGGVDGLVHVSELSHEHVQTPEEVVSIGQDVKVKIKSIDRDTERISLSIKDTLPTPFENIKGQFHENDDIEGVVVRLANFGAFVEIAPGVQGLVHISEIAHKHIGTPGEVLEPGQQVNVKILGIDEENERVSLSIKATLPNEDVVESDPSTTKAYLESEEEDNPTIGDMIGDKLKNLKL.

S1 motif domains are found at residues 16-90 (GDKV…LSRR), 108-173 (NEII…LSRK), 194-262 (GDVI…LSIK), and 279-348 (NDDI…LSIK). The segment at 356 to 381 (VVESDPSTTKAYLESEEEDNPTIGDM) is disordered.

Belongs to the bacterial ribosomal protein bS1 family.

Its function is as follows. Binds mRNA; thus facilitating recognition of the initiation point. It is needed to translate mRNA with a short Shine-Dalgarno (SD) purine-rich sequence. In Staphylococcus aureus (strain MRSA252), this protein is Small ribosomal subunit protein bS1 (rpsA).